A 235-amino-acid polypeptide reads, in one-letter code: Chalcone--flavanone isomerase 2 (235 aa).

Substrate-binding residues include Thr-50 and Ser-192.

Belongs to the chalcone isomerase family.

The enzyme catalyses a chalcone = a flavanone.. It participates in secondary metabolite biosynthesis; flavonoid biosynthesis. In terms of biological role, catalyzes the intramolecular cyclization of bicyclic chalcones into tricyclic (S)-flavanones. Responsible for the isomerization of 4,2',4',6'-tetrahydroxychalcone (also termed chalcone) into naringenin. This chain is Chalcone--flavanone isomerase 2 (CHI2), found in Chrysanthemum morifolium (Florist's daisy).